Here is a 1404-residue protein sequence, read N- to C-terminus: DNA-directed RNA polymerase subunit beta' (1404 aa).

Zn(2+) is bound by residues Cys70, Cys72, Cys85, and Cys88. Mg(2+) is bound by residues Asp460, Asp462, and Asp464. Residues Cys814, Cys888, Cys895, and Cys898 each contribute to the Zn(2+) site.

The protein belongs to the RNA polymerase beta' chain family. In terms of assembly, the RNAP catalytic core consists of 2 alpha, 1 beta, 1 beta' and 1 omega subunit. When a sigma factor is associated with the core the holoenzyme is formed, which can initiate transcription. Mg(2+) is required as a cofactor. The cofactor is Zn(2+).

The catalysed reaction is RNA(n) + a ribonucleoside 5'-triphosphate = RNA(n+1) + diphosphate. DNA-dependent RNA polymerase catalyzes the transcription of DNA into RNA using the four ribonucleoside triphosphates as substrates. The chain is DNA-directed RNA polymerase subunit beta' from Buchnera aphidicola subsp. Baizongia pistaciae (strain Bp).